The following is a 119-amino-acid chain: Large ribosomal subunit protein bL20 (119 aa).

It belongs to the bacterial ribosomal protein bL20 family.

Binds directly to 23S ribosomal RNA and is necessary for the in vitro assembly process of the 50S ribosomal subunit. It is not involved in the protein synthesizing functions of that subunit. The sequence is that of Large ribosomal subunit protein bL20 from Neisseria gonorrhoeae (strain ATCC 700825 / FA 1090).